Consider the following 395-residue polypeptide: DDB1- and CUL4-associated factor 4-like protein 2 (395 aa).

2 WD repeats span residues 268–307 and 312–351; these read SHDS…CVTQ and VNNS…LLTT.

The chain is DDB1- and CUL4-associated factor 4-like protein 2 (DCAF4L2) from Homo sapiens (Human).